The sequence spans 137 residues: S-protein homolog 16 (137 aa).

An N-terminal signal peptide occupies residues 1–21 (MKNLLVFIFVFSLCMFDHVSG). N-linked (GlcNAc...) asparagine glycosylation occurs at Asn-87.

This sequence belongs to the plant self-incompatibility (S1) protein family.

It is found in the secreted. This chain is S-protein homolog 16, found in Arabidopsis thaliana (Mouse-ear cress).